Reading from the N-terminus, the 290-residue chain is UPF0761 membrane protein Ent638_4092 (290 aa).

Helical transmembrane passes span 44 to 64 (LLSLVPLVAVIFALFAAFPMF), 104 to 124 (VGACGLIVTALLLMYAIDSAL), 140 to 160 (FAVYWMILTLGPLLAGASLAI), 183 to 203 (IFPLILSWLAFWLLYSIVPTL), 210 to 230 (AIVGALVAAILFELGKKGFAL), and 244 to 264 (VLAVVPILFVWVYWTWCIVLL).

It belongs to the UPF0761 family.

Its subcellular location is the cell inner membrane. In Enterobacter sp. (strain 638), this protein is UPF0761 membrane protein Ent638_4092.